The primary structure comprises 359 residues: uncharacterized protein (359 aa).

This is an uncharacterized protein from Archaeoglobus fulgidus (strain ATCC 49558 / DSM 4304 / JCM 9628 / NBRC 100126 / VC-16).